The primary structure comprises 483 residues: Regulatory protein ViaA (483 aa).

This sequence belongs to the ViaA family. In terms of assembly, homodimer. Interacts with RavA.

It localises to the cytoplasm. Component of the RavA-ViaA chaperone complex, which may act on the membrane to optimize the function of some of the respiratory chains. ViaA stimulates the ATPase activity of RavA. This is Regulatory protein ViaA from Salmonella arizonae (strain ATCC BAA-731 / CDC346-86 / RSK2980).